A 129-amino-acid chain; its full sequence is UPF0102 protein Cpar_0015 (129 aa).

It belongs to the UPF0102 family.

The protein is UPF0102 protein Cpar_0015 of Chlorobaculum parvum (strain DSM 263 / NCIMB 8327) (Chlorobium vibrioforme subsp. thiosulfatophilum).